Consider the following 102-residue polypeptide: ATP-dependent Clp protease adapter protein ClpS (102 aa).

Belongs to the ClpS family. In terms of assembly, binds to the N-terminal domain of the chaperone ClpA.

Functionally, involved in the modulation of the specificity of the ClpAP-mediated ATP-dependent protein degradation. This chain is ATP-dependent Clp protease adapter protein ClpS, found in Shewanella woodyi (strain ATCC 51908 / MS32).